Reading from the N-terminus, the 86-residue chain is MSKGHSLQDPYLNTLRKEKVPVSIYLVNGIKLQGQIESFDQFVVLLKNTVSQMVYKHAISTVVPARPVRLPSPSDAEHGDSEPGNA.

The 60-residue stretch at 9-68 folds into the Sm domain; that stretch reads DPYLNTLRKEKVPVSIYLVNGIKLQGQIESFDQFVVLLKNTVSQMVYKHAISTVVPARPV. The interval 66–86 is disordered; sequence RPVRLPSPSDAEHGDSEPGNA. Basic and acidic residues predominate over residues 75–86; that stretch reads DAEHGDSEPGNA.

Belongs to the Hfq family. In terms of assembly, homohexamer.

Its function is as follows. RNA chaperone that binds small regulatory RNA (sRNAs) and mRNAs to facilitate mRNA translational regulation in response to envelope stress, environmental stress and changes in metabolite concentrations. Also binds with high specificity to tRNAs. The chain is RNA-binding protein Hfq from Pseudomonas entomophila (strain L48).